The primary structure comprises 156 residues: Arginine repressor (156 aa).

Belongs to the ArgR family.

Its subcellular location is the cytoplasm. It functions in the pathway amino-acid biosynthesis; L-arginine biosynthesis [regulation]. Regulates arginine biosynthesis genes. In Vibrio atlanticus (strain LGP32) (Vibrio splendidus (strain Mel32)), this protein is Arginine repressor.